We begin with the raw amino-acid sequence, 819 residues long: Probable phosphoenolpyruvate synthase (819 aa).

His441 functions as the Tele-phosphohistidine intermediate in the catalytic mechanism. Positions 540, 587, 684, 706, 707, 708, and 709 each coordinate substrate. Glu684 lines the Mg(2+) pocket. Asp709 contributes to the Mg(2+) binding site. The Proton donor role is filled by Cys756.

It belongs to the PEP-utilizing enzyme family. Requires Mg(2+) as cofactor.

It catalyses the reaction pyruvate + ATP + H2O = phosphoenolpyruvate + AMP + phosphate + 2 H(+). It functions in the pathway carbohydrate biosynthesis; gluconeogenesis. Its function is as follows. Catalyzes the phosphorylation of pyruvate to phosphoenolpyruvate. This Pyrococcus abyssi (strain GE5 / Orsay) protein is Probable phosphoenolpyruvate synthase (ppsA).